The primary structure comprises 353 residues: Probable transport protein YPL264C (353 aa).

Topologically, residues 1–16 are cytoplasmic; the sequence is MTLQRISKDYLKPNYG. A helical transmembrane segment spans residues 17 to 37; the sequence is LILLIVSYFFNSSMVVSTKVL. One can recognise an EamA 1 domain in the interval 24–160; that stretch reads YFFNSSMVVS…SFSGVVLIIR (137 aa). Over 38-51 the chain is Extracellular; that stretch reads ENDPLETSQSRINP. A helical membrane pass occupies residues 52 to 69; sequence LQILLVRMSITYCCTLVY. Residues 70–94 are Cytoplasmic-facing; sequence MHWNKQSVPDIPWGPAPCRKWLILR. The helical transmembrane segment at 95-115 threads the bilayer; it reads GIMGFFGVFGMYFSLMYLSIS. A topological domain (extracellular) is located at residue aspartate 116. A helical membrane pass occupies residues 117 to 137; the sequence is AVLITFMSPTLTIFLSFLLLG. At 138–144 the chain is on the cytoplasmic side; the sequence is EPFSKLE. A helical transmembrane segment spans residues 145–165; that stretch reads ALGSLISFSGVVLIIRPTFLF. Residues 166-188 lie on the Extracellular side of the membrane; the sequence is GEQTQGQQSPQDDIVETQNPKLR. Residues 189-209 traverse the membrane as a helical segment; that stretch reads LIAIGVSLLGVCGLSSVYIII. Positions 200–326 constitute an EamA 2 domain; it reads CGLSSVYIII…IVSSTIWVIN (127 aa). The Cytoplasmic portion of the chain corresponds to 210 to 218; that stretch reads RYIGNKAHA. The helical transmembrane segment at 219–239 threads the bilayer; the sequence is IMSVSYFSLVTTVVAALGVLL. Topologically, residues 240-254 are extracellular; sequence IPSMSLQLPHSWKQW. The chain crosses the membrane as a helical span at residues 255–275; the sequence is GLFLNLGISGFIHQILLTMGI. Residues 276–282 lie on the Cytoplasmic side of the membrane; that stretch reads QRERAGR. The chain crosses the membrane as a helical span at residues 283 to 303; sequence GSLMTYTQVIYAVFWDVVLFH. A topological domain (extracellular) is located at residue histidine 304. The chain crosses the membrane as a helical span at residues 305-325; it reads WPNIWTWCGMAVIVSSTIWVI. The Cytoplasmic segment spans residues 326 to 353; that stretch reads NMRASKQNVVATAELLSTSDFELDDLED.

The protein resides in the membrane. This is Probable transport protein YPL264C from Saccharomyces cerevisiae (strain ATCC 204508 / S288c) (Baker's yeast).